The sequence spans 517 residues: DNA primase DnaG (517 aa).

Residues 171 to 257 (DAIIILEGRA…CVEDLVQKEV (87 aa)) form the Toprim domain. 3 residues coordinate Mg(2+): E177, D219, and D221.

The protein belongs to the archaeal DnaG primase family. As to quaternary structure, forms a ternary complex with MCM helicase and DNA. Component of the archaeal exosome complex. Requires Mg(2+) as cofactor.

It catalyses the reaction ssDNA + n NTP = ssDNA/pppN(pN)n-1 hybrid + (n-1) diphosphate.. Its function is as follows. RNA polymerase that catalyzes the synthesis of short RNA molecules used as primers for DNA polymerase during DNA replication. Also part of the exosome, which is a complex involved in RNA degradation. Acts as a poly(A)-binding protein that enhances the interaction between heteromeric, adenine-rich transcripts and the exosome. This chain is DNA primase DnaG, found in Methanosarcina barkeri (strain Fusaro / DSM 804).